Reading from the N-terminus, the 189-residue chain is Elongation factor P (189 aa).

K34 bears the N6-(3,6-diaminohexanoyl)-5-hydroxylysine mark.

It belongs to the elongation factor P family. Post-translationally, may be beta-lysylated on the epsilon-amino group of Lys-34 by the combined action of EpmA and EpmB, and then hydroxylated on the C5 position of the same residue by EpmC (if this protein is present). Lysylation is critical for the stimulatory effect of EF-P on peptide-bond formation. The lysylation moiety may extend toward the peptidyltransferase center and stabilize the terminal 3-CCA end of the tRNA. Hydroxylation of the C5 position on Lys-34 may allow additional potential stabilizing hydrogen-bond interactions with the P-tRNA.

It is found in the cytoplasm. The protein operates within protein biosynthesis; polypeptide chain elongation. Involved in peptide bond synthesis. Alleviates ribosome stalling that occurs when 3 or more consecutive Pro residues or the sequence PPG is present in a protein, possibly by augmenting the peptidyl transferase activity of the ribosome. Modification of Lys-34 is required for alleviation. The polypeptide is Elongation factor P (Buchnera aphidicola subsp. Acyrthosiphon pisum (strain APS) (Acyrthosiphon pisum symbiotic bacterium)).